The following is a 665-amino-acid chain: DNA mismatch repair protein MutL (665 aa).

Composition is skewed to polar residues over residues 348 to 361 (LEAT…NGLS) and 407 to 421 (PSSQ…NSRY). 2 disordered regions span residues 348-370 (LEAT…AEEG) and 385-445 (VHRG…STSA). Residues 426–445 (YSTNAASTNTASNYSHSTSA) are compositionally biased toward low complexity.

It belongs to the DNA mismatch repair MutL/HexB family.

Functionally, this protein is involved in the repair of mismatches in DNA. It is required for dam-dependent methyl-directed DNA mismatch repair. May act as a 'molecular matchmaker', a protein that promotes the formation of a stable complex between two or more DNA-binding proteins in an ATP-dependent manner without itself being part of a final effector complex. This Shewanella denitrificans (strain OS217 / ATCC BAA-1090 / DSM 15013) protein is DNA mismatch repair protein MutL.